Consider the following 235-residue polypeptide: Transcription factor MYB59 (235 aa).

HTH myb-type domains follow at residues 5-57 (QEEY…VNYL) and 58-112 (HPGL…RKKA). Positions 33–57 (WDFVAKVSGLNRTGKSCRLRWVNYL) form a DNA-binding region, H-T-H motif. Residues 62-65 (KRGK) carry the Bipartite nuclear localization signal 1 motif. The H-T-H motif DNA-binding region spans 85 to 108 (WSKIARKLPGRTDNEIKNYWRTHM). A Bipartite nuclear localization signal 2 motif is present at residues 109 to 117 (RKKAQEKKR). The segment at 109–147 (RKKAQEKKRPMSPTSSSSNCCSSSMTTTTSQDTGGSNGK) is disordered. Over residues 119–138 (MSPTSSSSNCCSSSMTTTTS) the composition is skewed to low complexity.

As to expression, mainly expressed in leaves and seedlings, and to a lower extent, in roots, stems and inflorescences. Isoform MYB59-1 and isoform MYB59-2 are present in roots, leaves, and seedlings, while the expression of isoform MYB59-3 and isoform MYB59-4 is confined to seedlings.

The protein localises to the nucleus. In terms of biological role, transcription factor. The protein is Transcription factor MYB59 (MYB59) of Arabidopsis thaliana (Mouse-ear cress).